The primary structure comprises 1665 residues: Protein scribble homolog (1665 aa).

Positions 1–804 (MLKCIPLWRC…MRVWRERMVE (804 aa)) are sufficient for targeting to adherens junction and to inhibit cell proliferation. Residue S37 is modified to Phosphoserine. LRR repeat units lie at residues 37-58 (SLEELLLDANQLRELPKPFFRL), 60-81 (NLRKLGLSDNEIQRLPPEVANF), 83-104 (QLVELDVSRNDIPEIPESIKFC), 106-127 (ALEIADFSGNPLSRLPDGFTQL), 129-150 (SLAHLALNDVSLQALPGDVGNL), 152-174 (NLVTLELRENLLKSLPASLSFLV), 175-197 (KLEQLDLGGNDLEVLPDTLGALP), 198-219 (NLRELWLDRNQLSALPPELGNL), 221-243 (RLVCLDVSENRLEELPVELGGLA), 244-265 (LLTDLLLSQNLLQRLPEGIGQL), 267-288 (QLSILKVDQNRLCEVTEAIGDC), 290-312 (NLSELILTENLLTALPHSLGKLT), 313-334 (KLTNLNVDRNHLEVLPPEIGGC), 336-357 (ALSVLSLRDNRLAVLPPELAHT), 359-381 (ELHVLDVAGNRLRSLPFALTHLN), and 382-402 (LKALWLAENQAQPMLRFQTED). T378 carries the post-translational modification Phosphothreonine. Disordered regions lie at residues 422 to 615 (PSLE…HFKI) and 635 to 689 (REGP…SAPS). Residues 428-437 (GQQSSPSESC) show a composition bias toward polar residues. Acidic residues predominate over residues 452-463 (DTLEGEEDAEEA). Residues 455 to 475 (EGEEDAEEAAAEKRGLQRRAT) are a coiled coil. T475 carries the phosphothreonine modification. 2 stretches are compositionally biased toward basic and acidic residues: residues 479–494 (SELKVMKRGIEERRNE) and 570–580 (FAEDTLIPRED). S583 carries the phosphoserine modification. A coiled-coil region spans residues 653 to 687 (RAHEEEEEEEEENRDEEEGEATTEEDDKEEAVASA). The segment covering 657 to 681 (EEEEEEEENRDEEEGEATTEEDDKE) has biased composition (acidic residues). A phosphothreonine mark is found at T674 and T675. Residues S694 and S750 each carry the phosphoserine modification. The segment at 703 to 1215 (IEPARIEEEE…SLESISSIDR (513 aa)) is interaction with ARHGEF7. Residues 714–801 (TLTIVRQTGG…AVQMRVWRER (88 aa)) form the PDZ 1 domain. A required for interaction with VIM region spans residues 714-1180 (TLTIVRQTGG…TVLVCDGFDT (467 aa)). At T812 the chain carries Phosphothreonine. A phosphoserine mark is found at S821, S861, and S925. 3 consecutive PDZ domains span residues 848–936 (AACL…ERET), 990–1079 (EICL…RRDP), and 1086–1180 (ELCI…GFDT). Phosphoserine occurs at positions 1126, 1206, 1209, 1212, 1218, 1262, 1265, and 1284. The segment covering 1213 to 1228 (IDRELSPEGPGKEKEL) has biased composition (basic and acidic residues). Residues 1213 to 1246 (IDRELSPEGPGKEKELASQALPWESESAETTGRN) form a disordered region. 2 disordered regions span residues 1263-1325 (AGSL…DELP) and 1341-1501 (VHPP…AERR). Residues 1264 to 1277 (GSLQRGPSATTGGK) are compositionally biased toward polar residues. K1291 is subject to Omega-N-methylarginine. A Phosphoserine modification is found at A1299. At R1312 the chain carries Omega-N-methylarginine. Phosphoserine is present on S1320. Phosphothreonine is present on T1353. S1359 bears the Phosphoserine mark. The segment covering 1364-1376 (SFRERQKYFELEV) has biased composition (basic and acidic residues). S1389 is modified (phosphoserine). Residues 1390–1421 (LVGADDLRKMQEEEARKLQQKRAQMLREEAVT) adopt a coiled-coil conformation. Residues 1394 to 1406 (DDLRKMQEEEARK) show a composition bias toward basic and acidic residues. Residues S1455 and S1458 each carry the phosphoserine modification. Residues 1471–1482 (AKAERRHQERLR) are compositionally biased toward basic and acidic residues. A phosphoserine mark is found at S1485, S1496, and S1518. Positions 1530–1577 (LSKSQEGRGKRGPLERLAEAPSPAPTPSPTPLEDFGLQTSASPGRLPL) are disordered. Positions 1534-1547 (QEGRGKRGPLERLA) are enriched in basic and acidic residues. S1551 carries the phosphoserine modification. T1555 is subject to Phosphothreonine. Residues S1557, S1571, and S1601 each carry the phosphoserine modification. Positions 1632–1665 (GRPSPGAVGPEDMTLCSSRRSVRPGRRGLGPVPS) are disordered.

It belongs to the LAP (LRR and PDZ) protein family. In terms of assembly, interacts with UBE3A. Interacts with PAK1 and PAK2. Interacts (via PDZ domains) with VANGL2. Interacts (via PDZ domains) with LPP and TRIP6; the interaction is direct. Interacts (via PDZ domains) with TJP2. Interacts (via PDZ domains) with APC; may mediate APC targeting to adherens junctions of epithelial cells. Interacts (via PDZ domains) with TSHR; regulates TSHR trafficking and function. Interacts with ARHGEF7 and GIT1; interacts directly with ARHGEF7. Interacts with CTNNB1. Interacts with MAPK12. Interacts (via PDZ domains 1 and 3) with MCC. Interacts with DLG5. Interacts with STK4/MST1 and LATS1 in the presence of DLG5. Interacts (via PDZ domain 3) with CRTAM (via PDZ-binding motif); the interaction promotes CRTAM and SCRIB polarization in a subset of CD4+ T-cells. Interacts with YES1, when YES1 is in a closed conformation; the interaction facilitates YES1 autophosphorylation. Interacts (via PDZ domains) with VIM; the interaction protects SCRIB from proteasomal degradation and facilitates SCRIB localization to intermediate filaments, the interaction is reduced by cell contact inhibition. Ubiquitinated; targeted for UBE3A-dependent multiubiquitination and degraded. Post-translationally, palmitoylated. Could be depalmitoylated by LYPLA1 and/or LYPLA2. Palmitoylation of SCRIB by ZDHHC7 is required for its localization to cell-cell junctions, function in the establishement of epithelial cell polarity and the regulation of downstream signaling pathways important for epithelial cell differentiation. Expressed in CD4+ T-cells (at protein level). Found in a wide range of tissues including liver, kidney and spleen. Also expressed in the brain (at protein level).

The protein localises to the cell membrane. The protein resides in the cell junction. It localises to the adherens junction. It is found in the cell projection. Its subcellular location is the lamellipodium. The protein localises to the cytoplasm. The protein resides in the postsynapse. It localises to the presynapse. Functionally, scaffold protein involved in different aspects of polarized cell differentiation regulating epithelial and neuronal morphogenesis and T-cell polarization. Via its interaction with CRTAM, required for the late phase polarization of a subset of CD4+ T-cells, which in turn regulates TCR-mediated proliferation and IFNG and IL22 production. Plays a role in cell directional movement, cell orientation, cell sheet organization and Golgi complex polarization at the cell migration front. Promotes epithelial cell layer barrier function via maintaining cell-cell adhesion. Most probably functions in the establishment of apico-basal cell polarity. May function in cell proliferation regulating progression from G1 to S phase and as a positive regulator of apoptosis for instance during acinar morphogenesis of the mammary epithelium. May regulate cell invasion via MAPK-mediated cell migration and adhesion. May play a role in exocytosis and in the targeting of synaptic vesicles to synapses. Functions as an activator of Rac GTPase activity. The sequence is that of Protein scribble homolog from Mus musculus (Mouse).